Here is a 117-residue protein sequence, read N- to C-terminus: UPF0145 protein PH1682 (117 aa).

This sequence belongs to the UPF0145 family.

The protein is UPF0145 protein PH1682 of Pyrococcus horikoshii (strain ATCC 700860 / DSM 12428 / JCM 9974 / NBRC 100139 / OT-3).